The sequence spans 665 residues: UvrABC system protein C (665 aa).

Residues 16 to 95 (ESPGVYRFRD…IKQYDPRFNV (80 aa)) enclose the GIY-YIG domain. A UVR domain is found at 208–243 (DLMVRRLEREMADASAELEFERAARLRDDLAALRRA). Residues 470 to 507 (EAGVESAGDPATPAGPASTGPGVPDEPRVGTLVDPTTG) are disordered. Residues 475–491 (SAGDPATPAGPASTGPG) show a composition bias toward low complexity.

The protein belongs to the UvrC family. Interacts with UvrB in an incision complex.

It is found in the cytoplasm. Its function is as follows. The UvrABC repair system catalyzes the recognition and processing of DNA lesions. UvrC both incises the 5' and 3' sides of the lesion. The N-terminal half is responsible for the 3' incision and the C-terminal half is responsible for the 5' incision. The polypeptide is UvrABC system protein C (Salinispora tropica (strain ATCC BAA-916 / DSM 44818 / JCM 13857 / NBRC 105044 / CNB-440)).